The primary structure comprises 368 residues: DNA integrity scanning protein DisA (368 aa).

The region spanning 15 to 153 is the DAC domain; sequence DERLRATLAA…DGRRHVLDEP (139 aa). ATP is bound by residues glycine 82, leucine 100, and 113–117; that span reads TRHRS. Residues 101–121 form a disordered region; the sequence is QPDPSIPTNESGTRHRSAERT. A compositionally biased stretch (basic and acidic residues) spans 112–121; the sequence is GTRHRSAERT.

Belongs to the DisA family. Homooctamer. Mg(2+) serves as cofactor.

It carries out the reaction 2 ATP = 3',3'-c-di-AMP + 2 diphosphate. In terms of biological role, participates in a DNA-damage check-point. DisA forms globular foci that rapidly scan along the chromosomes searching for lesions. Also has diadenylate cyclase activity, catalyzing the condensation of 2 ATP molecules into cyclic di-AMP (c-di-AMP). c-di-AMP likely acts as a signaling molecule that may couple DNA integrity with a cellular process. The protein is DNA integrity scanning protein DisA of Acidothermus cellulolyticus (strain ATCC 43068 / DSM 8971 / 11B).